Consider the following 401-residue polypeptide: Acetate kinase (401 aa).

Asn9 is a Mg(2+) binding site. Lys16 serves as a coordination point for ATP. Arg88 is a substrate binding site. The active-site Proton donor/acceptor is the Asp147. ATP is bound by residues 207–211 (HLGNG), 282–284 (DCR), and 333–337 (GIGEN). Glu388 provides a ligand contact to Mg(2+).

It belongs to the acetokinase family. As to quaternary structure, homodimer. Mg(2+) is required as a cofactor. Mn(2+) serves as cofactor.

The protein localises to the cytoplasm. The enzyme catalyses acetate + ATP = acetyl phosphate + ADP. Its pathway is metabolic intermediate biosynthesis; acetyl-CoA biosynthesis; acetyl-CoA from acetate: step 1/2. Functionally, catalyzes the formation of acetyl phosphate from acetate and ATP. Can also catalyze the reverse reaction. The polypeptide is Acetate kinase (Haemophilus influenzae (strain PittEE)).